The sequence spans 334 residues: Putative peptide import ATP-binding protein BAB2_1053 (334 aa).

The 251-residue stretch at 22–272 (VRTDDLVRDF…PLHPYSRALL (251 aa)) folds into the ABC transporter domain. ATP is bound at residue 64–71 (GESGSGKS).

Belongs to the ABC transporter superfamily. The complex is composed of two ATP-binding proteins (BAB2_1052 and BAB2_1053), two transmembrane proteins (BAB2_1050 and BAB2_1051) and a solute-binding protein (BAB2_1049).

The protein resides in the cell inner membrane. In terms of biological role, probably part of an ABC transporter complex that could be involved in peptide import. Probably responsible for energy coupling to the transport system. This chain is Putative peptide import ATP-binding protein BAB2_1053, found in Brucella abortus (strain 2308).